We begin with the raw amino-acid sequence, 270 residues long: Orotidine 5'-phosphate decarboxylase (270 aa).

Lys89 functions as the Proton donor in the catalytic mechanism.

Belongs to the OMP decarboxylase family. Type 2 subfamily.

The catalysed reaction is orotidine 5'-phosphate + H(+) = UMP + CO2. The protein operates within pyrimidine metabolism; UMP biosynthesis via de novo pathway; UMP from orotate: step 2/2. In Dehalococcoides mccartyi (strain ATCC BAA-2266 / KCTC 15142 / 195) (Dehalococcoides ethenogenes (strain 195)), this protein is Orotidine 5'-phosphate decarboxylase.